The primary structure comprises 438 residues: C4-dicarboxylate transport protein 1 (438 aa).

8 helical membrane-spanning segments follow: residues 20–42 (LYVQ…PSVA), 57–77 (LIKM…IAHI), 90–112 (ALFY…GNLV), 160–179 (VLQV…ALGK), 192–214 (AHAV…FGAM), 229–251 (LIGL…LGLI), 324–346 (LFIA…LLVA), and 361–383 (FITL…AIVF).

The protein belongs to the dicarboxylate/amino acid:cation symporter (DAACS) (TC 2.A.23) family.

The protein localises to the cell inner membrane. In terms of biological role, responsible for the transport of dicarboxylates such as succinate, fumarate, and malate from the periplasm across the membrane. This is C4-dicarboxylate transport protein 1 from Bradyrhizobium diazoefficiens (strain JCM 10833 / BCRC 13528 / IAM 13628 / NBRC 14792 / USDA 110).